The sequence spans 196 residues: Imidazoleglycerol-phosphate dehydratase (196 aa).

This sequence belongs to the imidazoleglycerol-phosphate dehydratase family.

Its subcellular location is the cytoplasm. It catalyses the reaction D-erythro-1-(imidazol-4-yl)glycerol 3-phosphate = 3-(imidazol-4-yl)-2-oxopropyl phosphate + H2O. It participates in amino-acid biosynthesis; L-histidine biosynthesis; L-histidine from 5-phospho-alpha-D-ribose 1-diphosphate: step 6/9. This chain is Imidazoleglycerol-phosphate dehydratase, found in Halobacterium salinarum (strain ATCC 700922 / JCM 11081 / NRC-1) (Halobacterium halobium).